The sequence spans 452 residues: Pup--protein ligase (452 aa).

Mg(2+) is bound at residue Glu9. Arg53 serves as a coordination point for ATP. Residue Tyr55 participates in Mg(2+) binding. Asp57 acts as the Proton acceptor in catalysis. Glu63 contributes to the Mg(2+) binding site. The ATP site is built by Thr66 and Trp419.

Belongs to the Pup ligase/Pup deamidase family. Pup-conjugating enzyme subfamily.

It carries out the reaction ATP + [prokaryotic ubiquitin-like protein]-L-glutamate + [protein]-L-lysine = ADP + phosphate + N(6)-([prokaryotic ubiquitin-like protein]-gamma-L-glutamyl)-[protein]-L-lysine.. The protein operates within protein degradation; proteasomal Pup-dependent pathway. It functions in the pathway protein modification; protein pupylation. In terms of biological role, catalyzes the covalent attachment of the prokaryotic ubiquitin-like protein modifier Pup to the proteasomal substrate proteins, thereby targeting them for proteasomal degradation. This tagging system is termed pupylation. The ligation reaction involves the side-chain carboxylate of the C-terminal glutamate of Pup and the side-chain amino group of a substrate lysine. The protein is Pup--protein ligase of Rhodococcus erythropolis (strain PR4 / NBRC 100887).